Consider the following 313-residue polypeptide: MNSIALGFLVINKPAGLTSHDCVNRLRRIYGIKRIGHGGTLDPAVTGVLPIAIGKATRLLSFLPSPKTYEGTIKLGISTNTDDLTGETISEHSWDQVKENSILNCLNKFQGEIKQCPPIFSSVHINGERAYKKARRGEFFELPPKLIKIYRIKLINWNKKDGTIDLEVHCSPGTYIRSLARDIGKKLGCGGALAKLNRTMALGFNIDQAIELPDLDKNNDLNKPMIIDPLKALSHLPSIKLMTIDELSSWRKGKHLILSKSRLKNPLYLIEDDKDIPKTFLTVINNENHLIGLARWHHEPFKIEPKIVFNADG.

D42 acts as the Nucleophile in catalysis.

This sequence belongs to the pseudouridine synthase TruB family. Type 1 subfamily.

It catalyses the reaction uridine(55) in tRNA = pseudouridine(55) in tRNA. Functionally, responsible for synthesis of pseudouridine from uracil-55 in the psi GC loop of transfer RNAs. In Prochlorococcus marinus (strain SARG / CCMP1375 / SS120), this protein is tRNA pseudouridine synthase B.